The chain runs to 150 residues: Large ribosomal subunit protein bL9 (150 aa).

The protein belongs to the bacterial ribosomal protein bL9 family.

In terms of biological role, binds to the 23S rRNA. The protein is Large ribosomal subunit protein bL9 of Corynebacterium glutamicum (strain R).